Consider the following 327-residue polypeptide: Chlorophenol reductase (327 aa).

The signal sequence occupies residues 1–24; that stretch reads MKKTLGIILSISLAFSVLALPIFA. In terms of domain architecture, LysM spans 65–110; it reads TYYTVVSGDFFWQIAAKHGLTIDALAKLNPQIKNVNLIFPGQKILV.

The cofactor is cob(I)alamin.

The protein localises to the secreted. It is found in the cell wall. The protein resides in the cell membrane. Inhibited by sulfide and to a lesser extent by nitrite. Its function is as follows. Reductive dechlorination of ortho-chlorophenols. Dechlorinates in the ortho position with respect to the hydroxyl group. The polypeptide is Chlorophenol reductase (Desulfitobacterium hafniense (Desulfitobacterium frappieri)).